We begin with the raw amino-acid sequence, 256 residues long: Zinc import ATP-binding protein ZnuC 1 (256 aa).

The region spanning 5–220 (LTLQDVCVVF…PKYIALFGQQ (216 aa)) is the ABC transporter domain. Residue 37-44 (GPNGAGKS) participates in ATP binding. The disordered stretch occupies residues 232-256 (HHHNHDLSGEPSDGSCCSKNKKAHQ).

Belongs to the ABC transporter superfamily. Zinc importer (TC 3.A.1.15.5) family. The complex is composed of two ATP-binding proteins (ZnuC), two transmembrane proteins (ZnuB) and a solute-binding protein (ZnuA).

It localises to the cell inner membrane. It carries out the reaction Zn(2+)(out) + ATP(in) + H2O(in) = Zn(2+)(in) + ADP(in) + phosphate(in) + H(+)(in). Functionally, part of the ABC transporter complex ZnuABC involved in zinc import. Responsible for energy coupling to the transport system. The chain is Zinc import ATP-binding protein ZnuC 1 from Aliivibrio fischeri (strain ATCC 700601 / ES114) (Vibrio fischeri).